The chain runs to 589 residues: Aspartate--tRNA ligase (589 aa).

Residue E174 participates in L-aspartate binding. Residues 198-201 (QLFK) are aspartate. R220 is an L-aspartate binding site. Residues 220–222 (RDE) and Q229 contribute to the ATP site. An L-aspartate-binding site is contributed by H448. Residue E483 participates in ATP binding. R490 contacts L-aspartate. ATP is bound at residue 535 to 538 (GIDR).

It belongs to the class-II aminoacyl-tRNA synthetase family. Type 1 subfamily. In terms of assembly, homodimer.

The protein localises to the cytoplasm. The catalysed reaction is tRNA(Asp) + L-aspartate + ATP = L-aspartyl-tRNA(Asp) + AMP + diphosphate. Functionally, catalyzes the attachment of L-aspartate to tRNA(Asp) in a two-step reaction: L-aspartate is first activated by ATP to form Asp-AMP and then transferred to the acceptor end of tRNA(Asp). The chain is Aspartate--tRNA ligase from Xylella fastidiosa (strain M23).